Reading from the N-terminus, the 219-residue chain is Large ribosomal subunit protein uL4 (219 aa).

Residues 43–100 form a disordered region; the sequence is AAKRQGTHSTKTRGEVSGGGKKPYRQKGTGRARQGSTRAPQFTGGGTVHGPQPRDYSQ.

Belongs to the universal ribosomal protein uL4 family. Part of the 50S ribosomal subunit.

Its function is as follows. One of the primary rRNA binding proteins, this protein initially binds near the 5'-end of the 23S rRNA. It is important during the early stages of 50S assembly. It makes multiple contacts with different domains of the 23S rRNA in the assembled 50S subunit and ribosome. Functionally, forms part of the polypeptide exit tunnel. This Mycobacterium sp. (strain JLS) protein is Large ribosomal subunit protein uL4.